Here is a 324-residue protein sequence, read N- to C-terminus: NADH-ubiquinone oxidoreductase chain 1 (324 aa).

9 helical membrane passes run 9–29 (LINPLAYIIPILLATAFLTLI), 43–63 (PNIVGPYGLLQPIADGLKLFI), 77–97 (FLATPTVALALALLMWMPLPL), 106–126 (LGLLFILAISSLTVYTILGSG), 146–166 (ISYEVSLGLILLSMIIFAGGF), 177–197 (TIWLLIPGWPLAFMWYISTLA), 228–248 (LFFLAEYTNILLMNTLSVILF), 259–279 (QISSLSLMMKASMLTVLFLWI), and 299–319 (FLPLTLAIILWHMALPLATTS).

Belongs to the complex I subunit 1 family.

The protein localises to the mitochondrion inner membrane. The catalysed reaction is a ubiquinone + NADH + 5 H(+)(in) = a ubiquinol + NAD(+) + 4 H(+)(out). Functionally, core subunit of the mitochondrial membrane respiratory chain NADH dehydrogenase (Complex I) that is believed to belong to the minimal assembly required for catalysis. Complex I functions in the transfer of electrons from NADH to the respiratory chain. The immediate electron acceptor for the enzyme is believed to be ubiquinone. The chain is NADH-ubiquinone oxidoreductase chain 1 (MT-ND1) from Scyliorhinus canicula (Small-spotted catshark).